Consider the following 269-residue polypeptide: Shikimate dehydrogenase (NADP(+)) (269 aa).

Shikimate-binding positions include 13–15 (SLS) and threonine 60. The active-site Proton acceptor is the lysine 64. Glutamate 76 contributes to the NADP(+) binding site. Positions 85 and 100 each coordinate shikimate. NADP(+) contacts are provided by residues 124–128 (GAGGA), 148–153 (NRTMSR), and isoleucine 209. Tyrosine 211 provides a ligand contact to shikimate. Residue glycine 232 participates in NADP(+) binding. Shikimate is bound at residue glutamine 239.

The protein belongs to the shikimate dehydrogenase family. In terms of assembly, monomer or homodimer.

It carries out the reaction shikimate + NADP(+) = 3-dehydroshikimate + NADPH + H(+). The protein operates within metabolic intermediate biosynthesis; chorismate biosynthesis; chorismate from D-erythrose 4-phosphate and phosphoenolpyruvate: step 4/7. In terms of biological role, involved in the biosynthesis of the chorismate, which leads to the biosynthesis of aromatic amino acids. Catalyzes the reversible NADPH linked reduction of 3-dehydroshikimate (DHSA) to yield shikimate (SA). It can also use NAD to oxidize shikimate. This is Shikimate dehydrogenase (NADP(+)) from Staphylococcus epidermidis (strain ATCC 35984 / DSM 28319 / BCRC 17069 / CCUG 31568 / BM 3577 / RP62A).